Here is a 109-residue protein sequence, read N- to C-terminus: Class I hydrophobin 18 (109 aa).

Residues 1-20 (MFTEQVLNVIILLQTATVTA) form the signal peptide. Intrachain disulfides connect Cys28-Cys88, Cys35-Cys82, Cys36-Cys69, and Cys89-Cys102. 2 N-linked (GlcNAc...) asparagine glycosylation sites follow: Asn91 and Asn106.

Belongs to the fungal hydrophobin family. Self-assembles to form functional amyloid fibrils called rodlets. Self-assembly into fibrillar rodlets occurs spontaneously at hydrophobic:hydrophilic interfaces and the rodlets further associate laterally to form amphipathic monolayers.

It localises to the secreted. It is found in the cell wall. Aerial growth, conidiation, and dispersal of filamentous fungi in the environment rely upon a capability of their secreting small amphipathic proteins called hydrophobins (HPBs) with low sequence identity. Class I can self-assemble into an outermost layer of rodlet bundles on aerial cell surfaces, conferring cellular hydrophobicity that supports fungal growth, development and dispersal; whereas Class II form highly ordered films at water-air interfaces through intermolecular interactions but contribute nothing to the rodlet structure. This chain is Class I hydrophobin 18, found in Pleurotus ostreatus (strain PC15) (Oyster mushroom).